Reading from the N-terminus, the 1323-residue chain is Inositol hexakisphosphate and diphosphoinositol-pentakisphosphate kinase (1323 aa).

26 to 27 (RK) contributes to the substrate binding site. Residues Arg109, Lys162, His169, Arg188, 212-215 (EEFI), and 221-223 (DVK) each bind ATP. Position 188 to 189 (188 to 189 (RK)) interacts with substrate. 2 residues coordinate substrate: Lys223 and Arg237. ATP is bound by residues Asp284 and 296-298 (DVN). 301–304 (SFVK) lines the substrate pocket. Residues 355 to 426 (TTPSGKLAEL…VLELARALVI (72 aa)) form a polyphosphoinositide-binding domain region. Composition is skewed to polar residues over residues 933–947 (FNLS…SSRS) and 977–992 (VTPT…NDDL). Disordered stretches follow at residues 933-1022 (FNLS…SEDD), 1043-1107 (AMAD…GGGK), and 1134-1155 (IVIP…ASER). The segment covering 993–1006 (SISSNAESTAAEST) has biased composition (low complexity). Residues 1062–1074 (KSMEEGDKPHGEW) are compositionally biased toward basic and acidic residues. Over residues 1090 to 1101 (SNEMESNNESME) the composition is skewed to low complexity.

The protein belongs to the histidine acid phosphatase family. VIP1 subfamily.

It is found in the cytoplasm. The protein resides in the cytosol. It catalyses the reaction 1D-myo-inositol hexakisphosphate + ATP = 1-diphospho-1D-myo-inositol 2,3,4,5,6-pentakisphosphate + ADP. The catalysed reaction is 5-diphospho-1D-myo-inositol 1,2,3,4,6-pentakisphosphate + ATP + H(+) = 1,5-bis(diphospho)-1D-myo-inositol 2,3,4,6-tetrakisphosphate + ADP. Functionally, bifunctional inositol kinase that acts in concert with the IP6K kinases to synthesize the diphosphate group-containing inositol pyrophosphates diphosphoinositol pentakisphosphate, PP-InsP5, and bis-diphosphoinositol tetrakisphosphate, (PP)2-InsP4. PP-InsP5 and (PP)2-InsP4, also respectively called InsP7 and InsP8, may regulate a variety of cellular processes, including apoptosis, vesicle trafficking, cytoskeletal dynamics, and exocytosis. Phosphorylates inositol hexakisphosphate (InsP6) at position 1 to produce PP-InsP5 which is in turn phosphorylated by IP6Ks to produce (PP)2-InsP4. Alternatively, phosphorylates PP-InsP5 at position 1, produced by IP6Ks from InsP6, to produce (PP)2-InsP4. The protein is Inositol hexakisphosphate and diphosphoinositol-pentakisphosphate kinase of Caenorhabditis elegans.